The chain runs to 98 residues: Small ribosomal subunit protein bS6 (98 aa).

The protein belongs to the bacterial ribosomal protein bS6 family.

In terms of biological role, binds together with bS18 to 16S ribosomal RNA. The protein is Small ribosomal subunit protein bS6 of Limosilactobacillus reuteri (strain DSM 20016) (Lactobacillus reuteri).